The chain runs to 71 residues: DNA-directed RNA polymerase subunit epsilon (71 aa).

It belongs to the RNA polymerase subunit epsilon family. As to quaternary structure, monomer. RNAP is composed of a core of 2 alpha, a beta and a beta' subunit. The core is associated with a delta subunit, and at least one of epsilon or omega. When a sigma factor is associated with the core the holoenzyme is formed, which can initiate transcription.

The enzyme catalyses RNA(n) + a ribonucleoside 5'-triphosphate = RNA(n+1) + diphosphate. In terms of biological role, a non-essential component of RNA polymerase (RNAP). Has a similar structure to bacteriophage T7 protein Gp2 (AC P03704), which is known to bind to RNAP in the DNA binding-cleft. Unlike Gp2 however, this protein does not inhibit transcription initiation. This Geobacillus stearothermophilus (strain DSM 13240 / CIP 106956 / 10) protein is DNA-directed RNA polymerase subunit epsilon.